Here is a 432-residue protein sequence, read N- to C-terminus: Adenylosuccinate synthetase (432 aa).

GTP-binding positions include 12–18 and 40–42; these read GDEGKGK and GHT. The active-site Proton acceptor is D13. The Mg(2+) site is built by D13 and G40. IMP is bound by residues 13 to 16, 38 to 41, T130, R144, Q225, T240, and R304; these read DEGK and NAGH. H41 functions as the Proton donor in the catalytic mechanism. Position 300–306 (300–306) interacts with substrate; that stretch reads STTGRPR. GTP is bound by residues R306, 332 to 334, and 414 to 416; these read KLD and SVG.

This sequence belongs to the adenylosuccinate synthetase family. In terms of assembly, homodimer. Requires Mg(2+) as cofactor.

It localises to the cytoplasm. It carries out the reaction IMP + L-aspartate + GTP = N(6)-(1,2-dicarboxyethyl)-AMP + GDP + phosphate + 2 H(+). It participates in purine metabolism; AMP biosynthesis via de novo pathway; AMP from IMP: step 1/2. Functionally, plays an important role in the de novo pathway of purine nucleotide biosynthesis. Catalyzes the first committed step in the biosynthesis of AMP from IMP. This is Adenylosuccinate synthetase from Geobacter sp. (strain M21).